A 180-amino-acid polypeptide reads, in one-letter code: Bifunctional protein PyrR (180 aa).

The short motif at 101–113 (VILVDDVLYTGRT) is the PRPP-binding element.

It belongs to the purine/pyrimidine phosphoribosyltransferase family. PyrR subfamily. Homodimer and homohexamer; in equilibrium.

It carries out the reaction UMP + diphosphate = 5-phospho-alpha-D-ribose 1-diphosphate + uracil. Functionally, regulates transcriptional attenuation of the pyrimidine nucleotide (pyr) operon by binding in a uridine-dependent manner to specific sites on pyr mRNA. This disrupts an antiterminator hairpin in the RNA and favors formation of a downstream transcription terminator, leading to a reduced expression of downstream genes. Its function is as follows. Also displays a weak uracil phosphoribosyltransferase activity which is not physiologically significant. The protein is Bifunctional protein PyrR of Bacillus mycoides (strain KBAB4) (Bacillus weihenstephanensis).